Consider the following 281-residue polypeptide: Digeranylgeranylglyceryl phosphate synthase (281 aa).

8 helical membrane passes run 7–27, 32–52, 72–91, 95–117, 128–148, 193–213, 214–234, and 258–278; these read ILRP…ALIT, FSVL…NVIN, GRIS…ALAS, FYLG…YYAW, ITIS…LGEV, ISGV…PSLY, LLGI…AVFL, and VGMA…TALT.

This sequence belongs to the UbiA prenyltransferase family. DGGGP synthase subfamily. Mg(2+) serves as cofactor.

It localises to the cell membrane. The catalysed reaction is sn-3-O-(geranylgeranyl)glycerol 1-phosphate + (2E,6E,10E)-geranylgeranyl diphosphate = 2,3-bis-O-(geranylgeranyl)-sn-glycerol 1-phosphate + diphosphate. It functions in the pathway membrane lipid metabolism; glycerophospholipid metabolism. Its function is as follows. Prenyltransferase that catalyzes the transfer of the geranylgeranyl moiety of geranylgeranyl diphosphate (GGPP) to the C2 hydroxyl of (S)-3-O-geranylgeranylglyceryl phosphate (GGGP). This reaction is the second ether-bond-formation step in the biosynthesis of archaeal membrane lipids. This is Digeranylgeranylglyceryl phosphate synthase from Methanothermobacter thermautotrophicus (strain ATCC 29096 / DSM 1053 / JCM 10044 / NBRC 100330 / Delta H) (Methanobacterium thermoautotrophicum).